Here is a 282-residue protein sequence, read N- to C-terminus: Bifunctional protein FolD (282 aa).

Residues glycine 165–serine 167 and serine 190 contribute to the NADP(+) site.

Belongs to the tetrahydrofolate dehydrogenase/cyclohydrolase family. As to quaternary structure, homodimer.

The catalysed reaction is (6R)-5,10-methylene-5,6,7,8-tetrahydrofolate + NADP(+) = (6R)-5,10-methenyltetrahydrofolate + NADPH. It catalyses the reaction (6R)-5,10-methenyltetrahydrofolate + H2O = (6R)-10-formyltetrahydrofolate + H(+). The protein operates within one-carbon metabolism; tetrahydrofolate interconversion. Catalyzes the oxidation of 5,10-methylenetetrahydrofolate to 5,10-methenyltetrahydrofolate and then the hydrolysis of 5,10-methenyltetrahydrofolate to 10-formyltetrahydrofolate. This Acinetobacter baumannii (strain ATCC 17978 / DSM 105126 / CIP 53.77 / LMG 1025 / NCDC KC755 / 5377) protein is Bifunctional protein FolD.